The following is a 148-amino-acid chain: Ubiquitin-conjugating enzyme E2-17 kDa (148 aa).

The UBC core domain maps to 1–147 (MASKRILKEL…ARSWTQKYAM (147 aa)). C85 functions as the Glycyl thioester intermediate in the catalytic mechanism.

Belongs to the ubiquitin-conjugating enzyme family.

The catalysed reaction is S-ubiquitinyl-[E1 ubiquitin-activating enzyme]-L-cysteine + [E2 ubiquitin-conjugating enzyme]-L-cysteine = [E1 ubiquitin-activating enzyme]-L-cysteine + S-ubiquitinyl-[E2 ubiquitin-conjugating enzyme]-L-cysteine.. Its pathway is protein modification; protein ubiquitination. In terms of biological role, catalyzes the covalent attachment of ubiquitin to other proteins. Mediates the selective degradation of short-lived and abnormal proteins. The sequence is that of Ubiquitin-conjugating enzyme E2-17 kDa from Solanum lycopersicum (Tomato).